The sequence spans 664 residues: MAGLSNSQIPDGEFTAVVYRLIRDSRYSEAVQLLSAELQRSSRSRAGLSLLAYCYYRLQEFELAAECYEQLSQMHPELEQYRLYQAQALYKACLYPEATRVAFLLDNPTFYSRVLRLQAAIKYSEGDLPGARSLVEQLLSGEAGEDSGGENDPDGLVNMGCLLYKEGHYEAACSKFFAALQASGYQPDVSYNLALACYSNRHYAPALKHIANIIERGIRQHPELGVGMTTEGIDVRSVGNTVVLHQTALVEAFNLKAAIEYQLRNYEAAQEALTDMPPRAEEELDPVTLHNQALMNMDAKPTEGFEKLQFLLQQNPFPPETFGNLLLLYCKYEYFDLAADVLAENAHLTYKFLTPYLYDFLDAMITCQTAPEEAFIKLDGLAGMLTEQLRRLTKQVQEARHNRDDEVVIKAVNEYDETLEKYIPVLMAQAKIYWNLENYPMVEKIFRKSVEFCNDHDVWKLNVAHVLFMQENKYKEAIGFYEPIVKKNYDNILSVSAIVLANLCVSYIMTSQNEEAEELMRKIEKEEEQLSYGDPDKKIYHLCIVNLVIGTLYCAKGNYDFGISRVIKSLEPYHKKLGTDTWYYAKRCFLSLLENMSKHTIMLRDSVIQECVQFLEHCEIFGRNIPAVIEQPLEEERMHIGKNTVTYESRQLKALIYEIIGWNM.

7 TPR repeats span residues 11 to 44, 45 to 78, 153 to 186, 188 to 220, 395 to 423, 424 to 456, and 458 to 491; these read DGEF…SSRS, RAGL…HPEL, PDGL…SGYQ, DVSY…GIRQ, QVQE…EKYI, PVLM…CNDH, and VWKL…NYDN. Positions 507–534 form a coiled coil; that stretch reads YIMTSQNEEAEELMRKIEKEEEQLSYGD. Residues 543-576 form a TPR 8 repeat; that stretch reads CIVNLVIGTLYCAKGNYDFGISRVIKSLEPYHKK.

This sequence belongs to the TTC30/dfy-1/fleer family. As to quaternary structure, interacts wit the IFT B complex component IFT52.

It localises to the cell projection. The protein localises to the cilium. In terms of biological role, required for polyglutamylation of axonemal tubulin. Plays a role in anterograde intraflagellar transport (IFT), the process by which cilia precursors are transported from the base of the cilium to the site of their incorporation at the tip. This Mus musculus (Mouse) protein is Intraflagellar transport protein 70A2 (Ift70a2).